Reading from the N-terminus, the 72-residue chain is Translation initiation factor IF-1 1 (72 aa).

Residues 1 to 72 (MSKEDVIQMQ…TKGRIVFRAK (72 aa)) form the S1-like domain.

The protein belongs to the IF-1 family. As to quaternary structure, component of the 30S ribosomal translation pre-initiation complex which assembles on the 30S ribosome in the order IF-2 and IF-3, IF-1 and N-formylmethionyl-tRNA(fMet); mRNA recruitment can occur at any time during PIC assembly.

The protein resides in the cytoplasm. Its function is as follows. One of the essential components for the initiation of protein synthesis. Stabilizes the binding of IF-2 and IF-3 on the 30S subunit to which N-formylmethionyl-tRNA(fMet) subsequently binds. Helps modulate mRNA selection, yielding the 30S pre-initiation complex (PIC). Upon addition of the 50S ribosomal subunit IF-1, IF-2 and IF-3 are released leaving the mature 70S translation initiation complex. The chain is Translation initiation factor IF-1 1 from Thiobacillus denitrificans (strain ATCC 25259 / T1).